The sequence spans 329 residues: 36 kDa antigen (329 aa).

A helical transmembrane segment spans residues 11–31 (AILTGGGALLLGLIVLFYLAY).

Belongs to the membrane fusion protein (MFP) (TC 8.A.1) family.

It localises to the membrane. This Helicobacter pylori (strain J99 / ATCC 700824) (Campylobacter pylori J99) protein is 36 kDa antigen.